The chain runs to 152 residues: Prefoldin subunit alpha (152 aa).

Residues Glu110–Glu152 form a disordered region. The segment covering Thr111–Glu124 has biased composition (acidic residues). Over residues Leu125–Glu152 the composition is skewed to low complexity.

Belongs to the prefoldin alpha subunit family. As to quaternary structure, heterohexamer of two alpha and four beta subunits.

It is found in the cytoplasm. In terms of biological role, molecular chaperone capable of stabilizing a range of proteins. Seems to fulfill an ATP-independent, HSP70-like function in archaeal de novo protein folding. This chain is Prefoldin subunit alpha, found in Halorubrum lacusprofundi (strain ATCC 49239 / DSM 5036 / JCM 8891 / ACAM 34).